The primary structure comprises 196 residues: Translation machinery-associated protein 22 (196 aa).

The region spanning 111–182 (IIIKRIERNK…EAKEYIEKLL (72 aa)) is the SUI1 domain.

It belongs to the DENR family. In terms of assembly, interacts with the 40S ribosomal subunit.

Its subcellular location is the cytoplasm. In Lodderomyces elongisporus (strain ATCC 11503 / CBS 2605 / JCM 1781 / NBRC 1676 / NRRL YB-4239) (Yeast), this protein is Translation machinery-associated protein 22 (TMA22).